A 270-amino-acid polypeptide reads, in one-letter code: S-methyl-5'-thioadenosine phosphorylase (270 aa).

Residues S16, 58 to 59 (RH), and 91 to 92 (SA) each bind phosphate. 3 cysteine pairs are disulfide-bonded: C138–C205, C200–C262, and C259–C261. M190 serves as a coordination point for substrate. Phosphate is bound at residue T191. 214–216 (DYD) serves as a coordination point for substrate.

This sequence belongs to the PNP/MTAP phosphorylase family. MTAP subfamily. As to quaternary structure, homohexamer. Dimer of a homotrimer.

It catalyses the reaction S-methyl-5'-thioadenosine + phosphate = 5-(methylsulfanyl)-alpha-D-ribose 1-phosphate + adenine. It functions in the pathway amino-acid biosynthesis; L-methionine biosynthesis via salvage pathway; S-methyl-5-thio-alpha-D-ribose 1-phosphate from S-methyl-5'-thioadenosine (phosphorylase route): step 1/1. Catalyzes the reversible phosphorylation of S-methyl-5'-thioadenosine (MTA) to adenine and 5-methylthioribose-1-phosphate. Involved in the breakdown of MTA, a major by-product of polyamine biosynthesis. Responsible for the first step in the methionine salvage pathway after MTA has been generated from S-adenosylmethionine. Has broad substrate specificity with 6-aminopurine nucleosides as preferred substrates. In Saccharolobus solfataricus (strain ATCC 35092 / DSM 1617 / JCM 11322 / P2) (Sulfolobus solfataricus), this protein is S-methyl-5'-thioadenosine phosphorylase.